Here is a 270-residue protein sequence, read N- to C-terminus: MRGQGRKESLSESRDLDGSYDQLTGHPPGPSKKALKQRFLKLLPCCGPQALPSVSETLAAPASLRPHRPRPLDPDSVEDEFELSTVCHRPEGLEQLQEQTKFTRRELQVLYRGFKNECPSGIVNEENFKQIYSQFFPQGDSSNYATFLFNAFDTNHDGSVSFEDFVAGLSVILRGTIDDRLSWAFNLYDLNKDGCITKEEMLDIMKSIYDMMGKYTYPALREEAPREHVESFFQKMDRNKDGVVTIEEFIESCQQDENIMRSMQLFDNVI.

Positions 1–17 (MRGQGRKESLSESRDLD) are enriched in basic and acidic residues. Positions 1–34 (MRGQGRKESLSESRDLDGSYDQLTGHPPGPSKKA) are disordered. At Ser9 the chain carries Phosphoserine. 2 S-palmitoyl cysteine lipidation sites follow: Cys45 and Cys46. The 57-residue stretch at 81–137 (FELSTVCHRPEGLEQLQEQTKFTRRELQVLYRGFKNECPSGIVNEENFKQIYSQFFP) folds into the EF-hand 1; degenerate domain. EF-hand domains follow at residues 140-175 (DSSN…ILRG), 176-211 (TIDD…IYDM), and 224-259 (APRE…DENI). Ca(2+) is bound by residues Asp153, Asn155, Asp157, Ser159, Asp164, Asp189, Asn191, Asp193, Cys195, Glu200, Asp237, Asn239, Asp241, and Glu248. Residues 257–270 (ENIMRSMQLFDNVI) form an interaction with KCND2 region.

The protein belongs to the recoverin family. Component of heteromultimeric potassium channels. Identified in potassium channel complexes containing KCND1, KCND2, KCND3, KCNIP1, KCNIP2, KCNIP3, KCNIP4, DPP6 and DPP10. The KCND2-KCNIP2 channel complex contains four KCND2 and four KCNIP2 subunits. Interacts with KCND2. Probably part of a complex consisting of KCNIP1, KCNIP2 isoform 3 and KCND2. At least isoform 2 and isoform 3 can self-associate to form homodimers and homotetramers. Isoform 3 interacts with KCNIP1 in a calcium-dependent manner. Interacts with KCND3; each KCNIP2 monomer interacts with two adjacent KCND3 subunits, through both the N-terminal inactivation ball of a KCND3 subunit and a C-terminal helix from the adjacent KCND3 subunit, clamping them together; this interaction modulates the channel gating kinetics. Palmitoylated. Palmitoylation enhances association with the plasma membrane. In terms of tissue distribution, expressed in heart, brain and lung. In brain, abundantly expressed in striatum, hippocampus and olfactory bulb, moderately expressed in cerebral cortex and lowly expressed in thalamus and hypothalamus. Isoform 1 is predominant in cerebral cortex, striatum and hippocampus. Isoform 1, isoform 2 and isoform 3 are equally expressed in olfactory bulb. Iisoform 3 is expressed at high levels and isoform 1 at low levels in heart (in PubMed:11263977).

It is found in the cell membrane. Its function is as follows. Regulatory subunit of Kv4/D (Shal)-type voltage-gated rapidly inactivating A-type potassium channels. Modulates channel density, inactivation kinetics and rate of recovery from inactivation in a calcium-dependent and isoform-specific manner. Involved in KCND2 and KCND3 trafficking to the cell surface. Essential for the expression of I(To) currents in the heart. Required for normal protein levels of KCND2 in the heart ventricle. This Rattus norvegicus (Rat) protein is A-type potassium channel modulatory protein KCNIP2.